The sequence spans 489 residues: UBX domain-containing protein 7 (489 aa).

Ala-2 bears the N-acetylalanine mark. Residues 2–54 (AAHGGSAASSALKGLIQQFTTITGASESVGKHMLEACNNNLEMAVTMFLDGGG) enclose the UBA domain. A disordered region spans residues 56–77 (AEEPSTSSASVSTVRPHTEEEV). Positions 59 to 70 (PSTSSASVSTVR) are enriched in polar residues. Lys-84 is covalently cross-linked (Glycyl lysine isopeptide (Lys-Gly) (interchain with G-Cter in SUMO2)). Residue Lys-99 forms a Glycyl lysine isopeptide (Lys-Gly) (interchain with G-Cter in ubiquitin) linkage. Lys-134 is covalently cross-linked (Glycyl lysine isopeptide (Lys-Gly) (interchain with G-Cter in SUMO2)). A phosphoserine mark is found at Ser-278, Ser-280, Ser-285, and Ser-288. Residues 285 to 304 (SEDSQLEAAIRASLQETHFD) form the UIM domain. Positions 300–309 (ETHFDSTQTK) are enriched in polar residues. Residues 300 to 384 (ETHFDSTQTK…PGTATNHQGL (85 aa)) form a disordered region. Residue Thr-306 is modified to Phosphothreonine. Positions 352–366 (HKDLGHRKEENRRPL) are enriched in basic and acidic residues. The 78-residue stretch at 408-485 (VNGPKAQLML…GLCPQETVFV (78 aa)) folds into the UBX domain.

As to quaternary structure, interacts with neddylated CUL2, ubiquitinated HIF1A, and VCP/p97.

It is found in the nucleus. Functionally, ubiquitin-binding adapter that links a subset of NEDD8-associated cullin ring ligases (CRLs) to the segregase VCP/p97, to regulate turnover of their ubiquitination substrates. The protein is UBX domain-containing protein 7 (UBXN7) of Homo sapiens (Human).